Here is a 425-residue protein sequence, read N- to C-terminus: Serine--tRNA ligase (425 aa).

230–232 (TAE) is a binding site for L-serine. 261-263 (RSE) is a binding site for ATP. Residue E284 participates in L-serine binding. 348 to 351 (EISS) contributes to the ATP binding site. S384 contributes to the L-serine binding site.

Belongs to the class-II aminoacyl-tRNA synthetase family. Type-1 seryl-tRNA synthetase subfamily. As to quaternary structure, homodimer. The tRNA molecule binds across the dimer.

The protein resides in the cytoplasm. The catalysed reaction is tRNA(Ser) + L-serine + ATP = L-seryl-tRNA(Ser) + AMP + diphosphate + H(+). It carries out the reaction tRNA(Sec) + L-serine + ATP = L-seryl-tRNA(Sec) + AMP + diphosphate + H(+). Its pathway is aminoacyl-tRNA biosynthesis; selenocysteinyl-tRNA(Sec) biosynthesis; L-seryl-tRNA(Sec) from L-serine and tRNA(Sec): step 1/1. Functionally, catalyzes the attachment of serine to tRNA(Ser). Is also able to aminoacylate tRNA(Sec) with serine, to form the misacylated tRNA L-seryl-tRNA(Sec), which will be further converted into selenocysteinyl-tRNA(Sec). This Streptococcus equi subsp. equi (strain 4047) protein is Serine--tRNA ligase.